The following is a 283-amino-acid chain: 4-diphosphocytidyl-2-C-methyl-D-erythritol kinase (283 aa).

Lysine 10 is an active-site residue. An ATP-binding site is contributed by 99 to 109 (PMGGGLGGGSS). Residue aspartate 141 is part of the active site.

Belongs to the GHMP kinase family. IspE subfamily. As to quaternary structure, homodimer.

It carries out the reaction 4-CDP-2-C-methyl-D-erythritol + ATP = 4-CDP-2-C-methyl-D-erythritol 2-phosphate + ADP + H(+). The protein operates within isoprenoid biosynthesis; isopentenyl diphosphate biosynthesis via DXP pathway; isopentenyl diphosphate from 1-deoxy-D-xylulose 5-phosphate: step 3/6. Functionally, catalyzes the phosphorylation of the position 2 hydroxy group of 4-diphosphocytidyl-2C-methyl-D-erythritol. The sequence is that of 4-diphosphocytidyl-2-C-methyl-D-erythritol kinase from Salmonella arizonae (strain ATCC BAA-731 / CDC346-86 / RSK2980).